The chain runs to 216 residues: Probable nicotinate-nucleotide adenylyltransferase (216 aa).

It belongs to the NadD family.

The catalysed reaction is nicotinate beta-D-ribonucleotide + ATP + H(+) = deamido-NAD(+) + diphosphate. Its pathway is cofactor biosynthesis; NAD(+) biosynthesis; deamido-NAD(+) from nicotinate D-ribonucleotide: step 1/1. Its function is as follows. Catalyzes the reversible adenylation of nicotinate mononucleotide (NaMN) to nicotinic acid adenine dinucleotide (NaAD). The chain is Probable nicotinate-nucleotide adenylyltransferase from Geobacter metallireducens (strain ATCC 53774 / DSM 7210 / GS-15).